Consider the following 273-residue polypeptide: 3-methyl-2-oxobutanoate hydroxymethyltransferase 3 (273 aa).

Mg(2+) contacts are provided by D49 and D88. 3-methyl-2-oxobutanoate contacts are provided by residues 49-50 (DS), D88, and K118. A Mg(2+)-binding site is contributed by E120. Catalysis depends on E187, which acts as the Proton acceptor.

This sequence belongs to the PanB family. As to quaternary structure, homodecamer; pentamer of dimers. Mg(2+) is required as a cofactor.

The protein resides in the cytoplasm. The catalysed reaction is 3-methyl-2-oxobutanoate + (6R)-5,10-methylene-5,6,7,8-tetrahydrofolate + H2O = 2-dehydropantoate + (6S)-5,6,7,8-tetrahydrofolate. It participates in cofactor biosynthesis; (R)-pantothenate biosynthesis; (R)-pantoate from 3-methyl-2-oxobutanoate: step 1/2. Functionally, catalyzes the reversible reaction in which hydroxymethyl group from 5,10-methylenetetrahydrofolate is transferred onto alpha-ketoisovalerate to form ketopantoate. The sequence is that of 3-methyl-2-oxobutanoate hydroxymethyltransferase 3 from Bradyrhizobium diazoefficiens (strain JCM 10833 / BCRC 13528 / IAM 13628 / NBRC 14792 / USDA 110).